The chain runs to 291 residues: 33 kDa chaperonin (291 aa).

2 disulfide bridges follow: cysteine 237–cysteine 239 and cysteine 270–cysteine 273.

The protein belongs to the HSP33 family. In terms of processing, under oxidizing conditions two disulfide bonds are formed involving the reactive cysteines. Under reducing conditions zinc is bound to the reactive cysteines and the protein is inactive.

It is found in the cytoplasm. Functionally, redox regulated molecular chaperone. Protects both thermally unfolding and oxidatively damaged proteins from irreversible aggregation. Plays an important role in the bacterial defense system toward oxidative stress. The chain is 33 kDa chaperonin from Bacillus mycoides (strain KBAB4) (Bacillus weihenstephanensis).